The following is a 167-amino-acid chain: MDRGRPAGSPLSASAEPAPLAAAIRDSRPGRTGPGPAGPGGGSRSGSGRPAAANAARERSRVQTLRHAFLELQRTLPSVPPDTKLSKLDVLLLATTYIAHLTRSLQDDAEAPADAGLGALRGDGYLHPVKKWPMRSRLYIGATGQFLKHSVSGEKTNHDNTPTDSQP.

A compositionally biased stretch (low complexity) spans 1–23; sequence MDRGRPAGSPLSASAEPAPLAAA. A disordered region spans residues 1–60; it reads MDRGRPAGSPLSASAEPAPLAAAIRDSRPGRTGPGPAGPGGGSRSGSGRPAAANAARERS. The span at 32 to 45 shows a compositional bias: gly residues; it reads TGPGPAGPGGGSRS. The segment covering 46–55 has biased composition (low complexity); sequence GSGRPAAANA. In terms of domain architecture, bHLH spans 49–101; it reads RPAAANAARERSRVQTLRHAFLELQRTLPSVPPDTKLSKLDVLLLATTYIAHL.

As to quaternary structure, efficient DNA binding requires dimerization with another bHLH protein.

The protein resides in the nucleus. Functionally, putative transcription factor. The polypeptide is Transcription factor 24 (TCF24) (Homo sapiens (Human)).